A 384-amino-acid chain; its full sequence is Probable protein phosphatase 2C 48 (384 aa).

One can recognise a PPM-type phosphatase domain in the interval 47 to 358; that stretch reads ITGEFSMAVV…DDITVIVVFL (312 aa). S78 bears the Phosphoserine mark. Mn(2+) is bound by residues D89, G90, D290, and D349.

It belongs to the PP2C family. Mg(2+) serves as cofactor. It depends on Mn(2+) as a cofactor.

The catalysed reaction is O-phospho-L-seryl-[protein] + H2O = L-seryl-[protein] + phosphate. It catalyses the reaction O-phospho-L-threonyl-[protein] + H2O = L-threonyl-[protein] + phosphate. May dephosphorylate and repress plasma membrane H(+)-ATPases (PM H(+)-ATPases, e.g. AHA1 and AHA2), thus influencing negatively plant growth and fitness. The protein is Probable protein phosphatase 2C 48 of Arabidopsis thaliana (Mouse-ear cress).